Here is a 930-residue protein sequence, read N- to C-terminus: Isoleucine--tRNA ligase (930 aa).

Residues 57-67 carry the 'HIGH' region motif; the sequence is PYANGNIHVGH. Glu-554 contacts L-isoleucyl-5'-AMP. The short motif at 595–599 is the 'KMSKS' region element; that stretch reads KMSKS. Lys-598 lines the ATP pocket. Cys-888, Cys-891, Cys-908, and Cys-911 together coordinate Zn(2+).

Belongs to the class-I aminoacyl-tRNA synthetase family. IleS type 1 subfamily. Monomer. The cofactor is Zn(2+).

It is found in the cytoplasm. It catalyses the reaction tRNA(Ile) + L-isoleucine + ATP = L-isoleucyl-tRNA(Ile) + AMP + diphosphate. Catalyzes the attachment of isoleucine to tRNA(Ile). As IleRS can inadvertently accommodate and process structurally similar amino acids such as valine, to avoid such errors it has two additional distinct tRNA(Ile)-dependent editing activities. One activity is designated as 'pretransfer' editing and involves the hydrolysis of activated Val-AMP. The other activity is designated 'posttransfer' editing and involves deacylation of mischarged Val-tRNA(Ile). This Streptococcus pneumoniae serotype 4 (strain ATCC BAA-334 / TIGR4) protein is Isoleucine--tRNA ligase.